The chain runs to 728 residues: Catalase-peroxidase 1 (728 aa).

The segment at residues 91 to 218 is a cross-link (tryptophyl-tyrosyl-methioninium (Trp-Tyr) (with M-244)); the sequence is WHSAGTYRTA…LAAVQMGLIY (128 aa). H92 acts as the Proton acceptor in catalysis. Residues 218 to 244 constitute a cross-link (tryptophyl-tyrosyl-methioninium (Tyr-Met) (with W-91)); that stretch reads YVNPEGPDGNPDPVAAAHDIRETFARM. H259 lines the heme b pocket.

The protein belongs to the peroxidase family. Peroxidase/catalase subfamily. As to quaternary structure, homodimer or homotetramer. Heme b serves as cofactor. Formation of the three residue Trp-Tyr-Met cross-link is important for the catalase, but not the peroxidase activity of the enzyme.

It carries out the reaction H2O2 + AH2 = A + 2 H2O. The catalysed reaction is 2 H2O2 = O2 + 2 H2O. In terms of biological role, bifunctional enzyme with both catalase and broad-spectrum peroxidase activity. The chain is Catalase-peroxidase 1 from Burkholderia orbicola (strain MC0-3).